Consider the following 466-residue polypeptide: UDP-N-acetylmuramoylalanine--D-glutamate ligase (466 aa).

121-127 is a binding site for ATP; that stretch reads GTNGKST.

Belongs to the MurCDEF family.

It is found in the cytoplasm. The enzyme catalyses UDP-N-acetyl-alpha-D-muramoyl-L-alanine + D-glutamate + ATP = UDP-N-acetyl-alpha-D-muramoyl-L-alanyl-D-glutamate + ADP + phosphate + H(+). The protein operates within cell wall biogenesis; peptidoglycan biosynthesis. Functionally, cell wall formation. Catalyzes the addition of glutamate to the nucleotide precursor UDP-N-acetylmuramoyl-L-alanine (UMA). The protein is UDP-N-acetylmuramoylalanine--D-glutamate ligase of Rhodopseudomonas palustris (strain HaA2).